The sequence spans 318 residues: Deoxyribose-phosphate aldolase (318 aa).

D155 acts as the Proton donor/acceptor in catalysis. The active-site Schiff-base intermediate with acetaldehyde is K218. The active-site Proton donor/acceptor is the K254.

It belongs to the DeoC/FbaB aldolase family. DeoC type 2 subfamily. As to quaternary structure, interacts with YBX1. In terms of tissue distribution, mainly expressed in liver, lung and colon.

The protein localises to the cytoplasm. It is found in the cytoplasmic granule. It localises to the nucleus. The catalysed reaction is 2-deoxy-D-ribose 5-phosphate = D-glyceraldehyde 3-phosphate + acetaldehyde. It participates in carbohydrate degradation; 2-deoxy-D-ribose 1-phosphate degradation; D-glyceraldehyde 3-phosphate and acetaldehyde from 2-deoxy-alpha-D-ribose 1-phosphate: step 2/2. Its function is as follows. Catalyzes a reversible aldol reaction between acetaldehyde and D-glyceraldehyde 3-phosphate to generate 2-deoxy-D-ribose 5-phosphate. Participates in stress granule (SG) assembly. May allow ATP production from extracellular deoxyinosine in conditions of energy deprivation. The polypeptide is Deoxyribose-phosphate aldolase (DERA) (Homo sapiens (Human)).